The sequence spans 3038 residues: MAQSMYPNEPIVVVGSGCRFPGDANTPSKLWELLQHPRDVQSRIPKERFDVDTFYHPDGKHHGRTNAPYAYVLQDDLGAFDAAFFNIQAGEAESMDPQHRLLLETVYEAVTNAGMRIQDLQGTSTAVYVGVMTHDYETVSTRDLESIPTYSATGVAVSVASNRISYFFDWHGPSMTIDTACSSSLVAVHLAVQQLRTGQSSMAIAAGANLILGPMTFVLESKLSMLSPSGRSRMWDAGADGYARGEAVCSVVLKTLSQALRDGDTIECVIRETGVNQDGRTTGITMPNHSAQEALIKATYAQAGLDITKAEDRCQFFEAHGTGTPAGDPQEAEAIATAFFGHEQVARSDGNERAPLFVGSAKTVVGHTEGTAGLAGLMKASFAVRHGVIPPNLLFDKISPRVAPFYKNLRIPTEATQWPALPPGQPRRASVNSFGFGGTNAHAIIEEYMEPEQNQLRVSNNEDCPPMTGVLSLPLVLSAKSQRSLKIMMEEMLQFLQSHPEIHLHDLTWSLLRKRSVLPFRRAIVGHSHETIRRALEDAIEDGIVSSDFTTEVRGQPSVLGIFTGQGAQWPGMLKNLIEASPYVRNIVRELDDSLQSLPEKYRPSWTLLDQFMLEGEASNVQYATFSQPLCCAVQIVLVRLLEAARIRFTAVVGHSSGEIACAFAAGLISASLAIRIAYLRGVVSAGGARGTPGAMLAAGMSFEEAQEICELDAFEGRICVAASNSPDSVTFSGDANAIDHLKGMLEDESTFARLLKVDTAYHSHHMLPCADPYMQALEECGCAVADAGSPAGSVPWYSSVDAENRQMAARDVTAKYWKDNLVSPVLFSHAVQRAVVTHKALDIGIEVGCHPALKSPCVATIKDVLSGVDLAYTGCLERGKNDLDSFSRALAYLWERFGASSFDADEFMRAVAPDRPCMSVSKLLPAYPWDRSRRYWVESRATRHHLRGPKPHLLLGKLSEYSTPLSFQWLNFVRPRDIEWLDGHALQGQTVFPAAGYIVMAMEAALMIAGTHAKQVKLLEILDMSIDKAVIFDDEDSLVELNLTADVSRNAGEAGSMTISFKIDSCLSKEGNLSLSAKGQLALTIEDVNPRTTSASDQHHLPPPEEEHPHMNRVNINAFYHELGLMGYNYSKDFRRLHNMQRADLRASGTLDFIPLMDEGNGCPLLLHPASLDVAFQTVIGAYSSPGDRRLRCLYVPTHVDRITLVPSLCLATAESGCEKVAFNTINTYDKGDYLSGDIVVFDAEQTTLFQVENITFKPFSPPDASTDHAMFARWSWGPLTPDSLLDNPEYWATAQDKEAIPIIERIVYFYIRSFLSQLTLEERQQAAFHLQKQIEWLEQVLASAKEGRHLWYDPGWENDTEAQIEHLCTANSYHPHVRLVQRVGQHLLPTVRSNGNPFDLLDHDGLLTEFYTNTLSFGPALHYARELVAQIAHRYQSMDILEIGAGTGGATKYVLATPQLGFNSYTYTDISTGFFEQAREQFAPFEDRMVFEPLDIRRSPAEQGFEPHAYDLIIASNVLHATPDLEKTMAHARSLLKPGGQMVILEITHKEHTRLGFIFGLFADWWAGVDDGRCTEPFVSFDRWDAILKRVGFSGVDSRTTDRDANLFPTSVFSTHAIDATVEYLDAPLASSGTVKDSYPPLVVVGGQTPQSQRLLNDIKAIMPPRPLQTYKRLVDLLDAEELPMKSTFVMLTELDEELFAGLTEETFEATKLLLTYASNTVWLTENAWVQHPHQASTIGMLRSIRREHPDLGVHVLDVDAVETFDATFLVEQVLRLEEHTDELASSTTWTQEPEVSWCKGRPWIPRLKRDLARNNRMNSSRRPIYEMIDSSRAPVALQTARDSSSYFLESAETWFVPESVQQMETKTIYVHFSCPHALRVGQLGFFYLVQGHVQEGNREVPVVALAERNASIVHVRPDYIYTEADNNLSEGGGSLMVTVLAAAVLAETVISTAKCLGVTDSILVLNPPSICGQMLLHAGEEIGLQVHLATTSGNRSSVSAGDAKSWLTLHARDTDWHLRRVLPRGVQALVDLSADQSCEGLTQRMMKVLMPGCAHYRAADLFTDTVSTELHSGSRHQASLPAAYWEHVVSLARQGLPSVSEGWEVMPCTQFAAHADKTRPDLSTVISWPRESDEATLPTRVRSIDAETLFAADKTYLLVGLTGDLGRSLGRWMVQHGACHIVLTSRNPQVNPKWLAHVEELGGRVTVLSMDVTSQNSVEAGLAKLKDLHLPPVGGIAFGPLVLQDVMLNNMELPMMEMVLNPKVEGVRILHEKFSDPTSSNPLDFFVMFSSIVAVMGNPGQANYSAANCYLQALAQQRVASGLAASTIDIGAVYGVGFVTRAELEEDFNAIRFMFDSVEEHELHTLFAEAVVAGRRAVHQQEQQRKFATVLDMADLELTTGIPPLDPALKDRITFFDDPRIGNLKIPEYRGAKAGEGAAGSKGSVKEQLLQATNLDQVRQIVIDGLSAKLQVTLQIPDGESVHPTIPLIDQGVDSLGAVTVGTWFSKQLYLDLPLLKVLGGASITDLANEAAARLPPSSIPLVAATDGGAESTDNTSENEVSGREDTDLSAAATITEPSSADEDDTEPGDEDVPRSHHPLSLGQEYSWRIQQGAEDPTVFNNTIGMFMKGSIDLKRLYKALRAVLRRHEIFRTGFANVDENGMAQLVFGQTKNKVQTIQVSDRAGAEEGYRQLVQTRYNPAAGDTLRLVDFFWGQDDHLLVVAYHRLVGDGSTTENIFVEAGQLYDGTSLSPHVPQFADLAARQRAMLEDGRMEEDLAYWKKMHYRPSSIPVLPLMRPLVGNSSRSDTPNFQHCGPWQQHEAVARLDPMVAFRIKERSRKHKATPMQFYLAAYQVLLARLTDSTDLTVGLADTNRATVDEMAAMGFFANLLPLRFRDFRPHITFGEHLIATRDLVREALQHARVPYGVLLDQLGLEVPVPTSNQPAPLFQAVFDYKQGQAESGTIGGAKITEVIATRERTPYDVVLEMSDDPTKDPLLTAKLQSSRYEAHHPQAFLESYMSLLSMFSMNPALKLA.

The Ketosynthase family 3 (KS3) domain maps to 8–447; that stretch reads NEPIVVVGSG…GTNAHAIIEE (440 aa). Active-site for beta-ketoacyl synthase activity residues include cysteine 181, histidine 320, and histidine 367. The segment at 562 to 889 is malonyl-CoA:ACP transacylase (MAT) domain; sequence IFTGQGAQWP…GKNDLDSFSR (328 aa). Serine 656 (for malonyltransferase activity) is an active-site residue. Positions 695 to 757 are lovC-binding; it reads AMLAAGMSFE…DESTFARLLK (63 aa). Positions 953 to 1089 are N-terminal hotdog fold; it reads HLLLGKLSEY…GQLALTIEDV (137 aa). Residues 953–1263 form a dehydratase (DH) domain region; sequence HLLLGKLSEY…ENITFKPFSP (311 aa). The PKS/mFAS DH domain occupies 953–1267; that stretch reads HLLLGKLSEY…FKPFSPPDAS (315 aa). Residue histidine 985 is the Proton acceptor; for dehydratase activity of the active site. Positions 1107–1267 are C-terminal hotdog fold; the sequence is EEHPHMNRVN…FKPFSPPDAS (161 aa). Aspartate 1174 serves as the catalytic Proton donor; for dehydratase activity. The tract at residues 1443–1543 is methyltransferase (CMet) domain; that stretch reads LEIGAGTGGA…ARSLLKPGGQ (101 aa). Positions 2139-2437 are ketoreductase (KR) domain; that stretch reads TLPTRVRSID…KIPEYRGAKA (299 aa). The Carrier domain maps to 2463 to 2538; the sequence is QIVIDGLSAK…DLANEAAARL (76 aa). Position 2498 is an O-(pantetheine 4'-phosphoryl)serine (serine 2498). A disordered region spans residues 2546-2602; it reads VAATDGGAESTDNTSENEVSGREDTDLSAAATITEPSSADEDDTEPGDEDVPRSHHP. Over residues 2583 to 2594 the composition is skewed to acidic residues; that stretch reads SADEDDTEPGDE. The segment at 2602–2952 is inactive Condensation domain; the sequence is PLSLGQEYSW…PTSNQPAPLF (351 aa).

Homodimer. Each MAT domain from the lovB homodimer binds one lovC molecule to form the final active lovB-lovC megasynthase complex. Pantetheine 4'-phosphate serves as cofactor.

It catalyses the reaction holo-[lovastatin nonaketide synthase] + 9 malonyl-CoA + S-adenosyl-L-methionine + 11 NADPH + 19 H(+) = dihydromonacolin L-[lovastatin nonaketide synthase] + S-adenosyl-L-homocysteine + 9 CO2 + 11 NADP(+) + 9 CoA + 6 H2O. Its pathway is polyketide biosynthesis; lovastatin biosynthesis. Functionally, lovastatin nonaketide synthase; part of the gene cluster that mediates the biosynthesis of lovastatin (also known as mevinolin, mevacor or monacolin K), a hypolipidemic inhibitor of (3S)-hydroxymethylglutaryl-coenzyme A (HMG-CoA) reductase (HMGR). The first step in the biosynthesis of lovastatin is the production of dihydromonacolin L acid by the lovastatin nonaketide synthase lovB and the trans-acting enoyl reductase lovC (called the lovB-lovC megasynthase complex) via condensation of one acetyl-CoA unit and 8 malonyl-CoA units. The formation of the LovB/C complex is essential for the integrity of the catalytic chamber to the complete total synthesis of DML acid. Dihydromonacolin L acid is released from lovB by the thioesterase lovG. Next, dihydromonacolin L acid is oxidized by the dihydromonacolin L monooxygenase lovA twice to form monacolin J acid. The 2-methylbutyrate moiety of lovastatin is synthesized by the lovastatin diketide synthase lovF via condensation of one acetyl-CoA unit and one malonyl-CoA unit. Finally, the covalent attachment of this moiety to monacolin J acid is catalyzed by the transesterase lovD to yield lovastatin. LovD has broad substrate specificity and can also convert monacolin J to simvastatin using alpha-dimethylbutanoyl-S-methyl-3-mercaptopropionate (DMB-S-MMP) as the thioester acyl donor, and can also catalyze the reverse reaction and function as hydrolase in vitro. LovD has much higher activity with LovF-bound 2-methylbutanoate than with free diketide substrates. This chain is Lovastatin nonaketide synthase, polyketide synthase component, found in Aspergillus terreus.